Reading from the N-terminus, the 441-residue chain is Polycomb protein EED (441 aa).

A disordered region spans residues 1–72 (MSEREVSTAP…PGRKSWGKGK (72 aa)). The residue at position 2 (Ser2) is an N-acetylserine. A phosphoserine mark is found at Ser2 and Ser34. Residues 45–61 (ESGTNTERPDTPTNTPN) show a composition bias toward polar residues. Thr55 bears the Phosphothreonine mark. Lys66 is modified (N6,N6,N6-trimethyllysine; alternate). Lys66 is subject to N6,N6-dimethyllysine; alternate. Position 66 is an N6-methyllysine; alternate (Lys66). An interaction with EZH2 region spans residues 81–441 (SFKCVNSLKE…ASIWRWDRLR (361 aa)). WD repeat units lie at residues 91-134 (DHNQ…EIRL), 142-185 (DADE…CIKH), 188-228 (GHGN…LVAI), and 234-275 (GHRD…NAIK). Required for interaction with the matrix protein MA of HIV-1 stretches follow at residues 149-303 (TCAW…STRD) and 301-441 (TRDI…DRLR). 3 positions are modified to N6,N6,N6-trimethyllysine; alternate: Lys197, Lys268, and Lys284. Residues Lys197, Lys268, and Lys284 each carry the N6,N6-dimethyllysine; alternate modification. 3 positions are modified to N6-methyllysine; alternate: Lys197, Lys268, and Lys284. WD repeat units follow at residues 304–341 (IHRNYVDCVRWLGDLILSKSCENAIVCWKPGKMEDDID), 359–399 (SQCD…PHKA), and 408–441 (KCGAAIRQTSFSRDSSILIAVCDDASIWRWDRLR).

It belongs to the WD repeat ESC family. As to quaternary structure, component of the PRC2/EED-EZH2 complex, which includes EED, EZH2, SUZ12, RBBP4 and RBBP7 and possibly AEBP2. The minimum components required for methyltransferase activity of the PRC2/EED-EZH2 complex are EED, EZH2 and SUZ12. Component of the PRC2/EED-EZH1 complex, which includes EED, EZH1, SUZ12, RBBP4 and AEBP2. The PRC2 complex may also interact with DNMT1, DNMT3A, DNMT3B and PHF1 via the EZH2 subunit and with SIRT1 via the SUZ12 subunit. Interacts with HDAC, HDAC2, histone H1 and YY1. May interact with ITGA4, ITGAE and ITGB7. Interacts with CDYL. Interacts with BMAL1. Interacts with KMT2A/MLL1. (Microbial infection) May interact with the MA protein of HIV-1. Post-translationally, methylated. Binding to histone H1 'Lys-26' promotes mono-, di-, and trimethylation of internal lysines. As to expression, expressed in brain, colon, heart, kidney, liver, lung, muscle, ovary, peripheral blood leukocytes, pancreas, placenta, prostate, spleen, small intestine, testis, thymus and uterus. Appears to be overexpressed in breast and colon cancer.

The protein localises to the nucleus. It localises to the chromosome. In terms of biological role, polycomb group (PcG) protein. Component of the PRC2/EED-EZH2 complex, which methylates 'Lys-9' and 'Lys-27' of histone H3, leading to transcriptional repression of the affected target gene. Also recognizes 'Lys-26' trimethylated histone H1 with the effect of inhibiting PRC2 complex methyltransferase activity on nucleosomal histone H3 'Lys-27', whereas H3 'Lys-27' recognition has the opposite effect, enabling the propagation of this repressive mark. The PRC2/EED-EZH2 complex may also serve as a recruiting platform for DNA methyltransferases, thereby linking two epigenetic repression systems. Genes repressed by the PRC2/EED-EZH2 complex include HOXC8, HOXA9, MYT1 and CDKN2A. In Homo sapiens (Human), this protein is Polycomb protein EED.